The chain runs to 289 residues: Splicing factor C9orf78 (289 aa).

Over residues 1-12 the composition is skewed to basic residues; the sequence is MPVVRKIFRRRR. The interval 1 to 27 is disordered; the sequence is MPVVRKIFRRRRGDSESEEDEQDSEEV. The interaction with SNRNP200 stretch occupies residues 5-58; it reads RKIFRRRRGDSESEEDEQDSEEVRLKLEETREVQNLRKRPNGVSAVALLVGEKV. Ser15 and Ser17 each carry phosphoserine. Tyr147 bears the Phosphotyrosine mark. Residues 232-283 are compositionally biased toward basic and acidic residues; it reads LNAPIRRNKEEPKARPLRVGDTEKPEPERSPPNRKRPANEKATDDYHYEKFK. The interval 232-289 is disordered; it reads LNAPIRRNKEEPKARPLRVGDTEKPEPERSPPNRKRPANEKATDDYHYEKFKKMNRRY. Thr253 is modified (phosphothreonine). At Ser261 the chain carries Phosphoserine.

It belongs to the TLS1 family. As to quaternary structure, component of the spliceosome. Interacts with SNRNP200; the interaction is direct. Interacts with PRPF8.

The protein resides in the nucleus. The protein localises to the chromosome. It localises to the centromere. Functionally, plays a role in pre-mRNA splicing by promoting usage of the upstream 3'-splice site at alternative NAGNAG splice sites; these are sites featuring alternative acceptor motifs separated by only a few nucleotides. May also modulate exon inclusion events. Plays a role in spliceosomal remodeling by displacing WBP4 from SNRNP200 and may act to inhibit SNRNP200 helicase activity. Binds U5 snRNA. Required for proper chromosome segregation. Not required for splicing of shelterin components. The sequence is that of Splicing factor C9orf78 (C9orf78) from Homo sapiens (Human).